Consider the following 297-residue polypeptide: Alpha/beta-gliadin A-IV (297 aa).

The signal sequence occupies residues methionine 1–alanine 20. Residues glutamine 29–glutamine 55 are compositionally biased toward low complexity. Disordered regions lie at residues glutamine 29 to glutamine 127 and glutamine 234 to proline 257. Residues proline 56–glutamine 67 show a composition bias toward pro residues. Positions proline 68–proline 80 are enriched in low complexity. Pro residues predominate over residues phenylalanine 81–phenylalanine 101. Composition is skewed to low complexity over residues arginine 102–glutamine 127 and glutamine 234–glutamine 250.

It belongs to the gliadin/glutenin family. In terms of processing, substrate of transglutaminase.

Its function is as follows. Gliadin is the major seed storage protein in wheat. This chain is Alpha/beta-gliadin A-IV, found in Triticum aestivum (Wheat).